The chain runs to 784 residues: LPS-assembly protein LptD (784 aa).

The first 24 residues, 1–24 (MKKRIPTLLATMIATALYSQQGLA), serve as a signal peptide directing secretion. 2 disulfides stabilise this stretch: Cys31-Cys724 and Cys173-Cys725.

This sequence belongs to the LptD family. Component of the lipopolysaccharide transport and assembly complex. Interacts with LptE and LptA. Post-translationally, contains two intramolecular disulfide bonds.

The protein localises to the cell outer membrane. Its function is as follows. Together with LptE, is involved in the assembly of lipopolysaccharide (LPS) at the surface of the outer membrane. The chain is LPS-assembly protein LptD from Escherichia coli O157:H7.